The chain runs to 255 residues: EEF1A lysine methyltransferase 4 (255 aa).

The S-adenosyl-L-methionine site is built by Trp26 and Tyr30. Phosphotyrosine is present on Tyr39. S-adenosyl-L-methionine-binding positions include Trp41, Gly66, 88–89, 113–114, and Lys130; these read DY and DV. Positions 129–134 match the Required for methyltransferase activity motif; that stretch reads EKGTLD.

It belongs to the methyltransferase superfamily.

The enzyme catalyses L-lysyl-[protein] + S-adenosyl-L-methionine = N(6)-methyl-L-lysyl-[protein] + S-adenosyl-L-homocysteine + H(+). It catalyses the reaction N(6)-methyl-L-lysyl-[protein] + S-adenosyl-L-methionine = N(6),N(6)-dimethyl-L-lysyl-[protein] + S-adenosyl-L-homocysteine + H(+). The catalysed reaction is N(6),N(6)-dimethyl-L-lysyl-[protein] + S-adenosyl-L-methionine = N(6),N(6),N(6)-trimethyl-L-lysyl-[protein] + S-adenosyl-L-homocysteine + H(+). In terms of biological role, protein-lysine methyltransferase that efficiently catalyzes three successive methylations on 'Lys-36' in eukaryotic translation elongation factor 1 alpha (EEF1A1 or EEF1A2). In Bos taurus (Bovine), this protein is EEF1A lysine methyltransferase 4.